We begin with the raw amino-acid sequence, 401 residues long: Argininosuccinate synthase (401 aa).

8–16 provides a ligand contact to ATP; it reads AYSGGLDTS. Residue Y85 participates in L-citrulline binding. G115 is an ATP binding site. T117, N121, and D122 together coordinate L-aspartate. N121 contributes to the L-citrulline binding site. L-citrulline-binding residues include R125, S173, E258, and Y270.

Belongs to the argininosuccinate synthase family. Type 1 subfamily. Homotetramer.

It localises to the cytoplasm. It carries out the reaction L-citrulline + L-aspartate + ATP = 2-(N(omega)-L-arginino)succinate + AMP + diphosphate + H(+). Its pathway is amino-acid biosynthesis; L-arginine biosynthesis; L-arginine from L-ornithine and carbamoyl phosphate: step 2/3. In Staphylococcus aureus (strain bovine RF122 / ET3-1), this protein is Argininosuccinate synthase.